The sequence spans 230 residues: 2,3-bisphosphoglycerate-dependent phosphoglycerate mutase 2 (230 aa).

Residues 8-15 (RHGQSEWN), 21-22 (TG), R60, 87-90 (ERHY), K98, 114-115 (RR), and 183-184 (GN) each bind substrate. H9 acts as the Tele-phosphohistidine intermediate in catalysis. Residue E87 is the Proton donor/acceptor of the active site.

It belongs to the phosphoglycerate mutase family. BPG-dependent PGAM subfamily.

The enzyme catalyses (2R)-2-phosphoglycerate = (2R)-3-phosphoglycerate. It participates in carbohydrate degradation; glycolysis; pyruvate from D-glyceraldehyde 3-phosphate: step 3/5. Catalyzes the interconversion of 2-phosphoglycerate and 3-phosphoglycerate. This Lactiplantibacillus plantarum (strain ATCC BAA-793 / NCIMB 8826 / WCFS1) (Lactobacillus plantarum) protein is 2,3-bisphosphoglycerate-dependent phosphoglycerate mutase 2.